Consider the following 384-residue polypeptide: GTPase Obg (384 aa).

The Obg domain maps to Met-1 to Leu-159. The tract at residues Ala-20–Trp-46 is disordered. The span at Gly-33 to Gly-43 shows a compositional bias: gly residues. Positions Ala-160–Thr-348 constitute an OBG-type G domain. Residues Gly-166–Ser-173, Phe-191–His-195, Asp-213–Gly-216, Asn-284–Asp-287, and Ser-329–Leu-331 each bind GTP. Mg(2+) contacts are provided by Ser-173 and Thr-193.

The protein belongs to the TRAFAC class OBG-HflX-like GTPase superfamily. OBG GTPase family. Monomer. Requires Mg(2+) as cofactor.

It localises to the cytoplasm. Its function is as follows. An essential GTPase which binds GTP, GDP and possibly (p)ppGpp with moderate affinity, with high nucleotide exchange rates and a fairly low GTP hydrolysis rate. Plays a role in control of the cell cycle, stress response, ribosome biogenesis and in those bacteria that undergo differentiation, in morphogenesis control. In Neisseria meningitidis serogroup C (strain 053442), this protein is GTPase Obg.